A 279-amino-acid polypeptide reads, in one-letter code: Energy-coupling factor transporter ATP-binding protein EcfA1 (279 aa).

The ABC transporter domain maps to 8-240 (IKFENVSFSY…KQFLRDINLD (233 aa)). 41–48 (GHNGSGKS) serves as a coordination point for ATP.

Belongs to the ABC transporter superfamily. Energy-coupling factor EcfA family. As to quaternary structure, forms a stable energy-coupling factor (ECF) transporter complex composed of 2 membrane-embedded substrate-binding proteins (S component), 2 ATP-binding proteins (A component) and 2 transmembrane proteins (T component).

The protein localises to the cell membrane. Functionally, ATP-binding (A) component of a common energy-coupling factor (ECF) ABC-transporter complex. Unlike classic ABC transporters this ECF transporter provides the energy necessary to transport a number of different substrates. This is Energy-coupling factor transporter ATP-binding protein EcfA1 from Mycoplasmoides gallisepticum (strain R(low / passage 15 / clone 2)) (Mycoplasma gallisepticum).